The following is an 818-amino-acid chain: MFLGRAASRTCRHSQPLRVAARAKSTTTAVASSSWHQYGVTGGILASTSSSSRTVVNPAKQRRWVRMASTATATKPTEEASSSDQPPAPAHKLTDNDVKRLTFQRNIGISAHIDSGKTTLSERILFYTGKIREIHEVRGRDAVGAKMDNMDLEREKGITIQSAATFCDWEATNPEDGSKQKYSINVIDTPGHVDFTIEVERALRVLDGAILVLCAVAGVQSQTTTVDRQMRRYNVPRISFINKMDRPGANPWRIVNQIRTKLRMPAAAVQVPIGTEDELKGVVDLVHWRALYNEGPKGTEIRVSKDIPESVAELAKQKRAELIEQLAEVDEEIGELFLMDETPTNRQIADAIRRATIDLKFSPVFMGSAMKNTGVQFLLDGVCEYLPNPSEREVLAIDNKNLDPATASSQASQTPNVPLVPAAAAPFVGLAFKLEEGRFGQLTYVRVYQGTLKKAMNIWNVRTGKKVKVPRLVRMHSDEMEDIDSIGPGEICAMFGVECSSGDTFTDGTSTYSMTSMFVPEPVISLAIKPKGQETPNFSRALNRFQKEDPTFRVHIDQESKETIISGMGELHLEIYVERMRREYNTECITGKPRVAFRETITQRAEFAYTHKKQTGGAGQFARVIGYIEPMEMDPETGKDVAFENLVMGGNIPTNFIPAVEKGFYEALEKGSLTGNPITGVRFVLKDGAFHAVDSSELAFRLATIGAFREAFKKARGIVLEPVMTVDVVAPSEFQSNVIGGLNTRRGTIVDSEVRDDEFTAVAEVALNDMFGYSNQLRGSTQGKGEFSMEYKHHAPVLPNVQKELEEAYQKTLPQSKK.

The N-terminal 23 residues, 1 to 23 (MFLGRAASRTCRHSQPLRVAARA), are a transit peptide targeting the mitochondrion. Residues 67–96 (MASTATATKPTEEASSSDQPPAPAHKLTDN) form a disordered region. Residues 69–85 (STATATKPTEEASSSDQ) are compositionally biased toward polar residues. One can recognise a tr-type G domain in the interval 102-390 (TFQRNIGISA…GVCEYLPNPS (289 aa)). Residues 111–118 (AHIDSGKT), 188–192 (DTPGH), and 242–245 (NKMD) contribute to the GTP site.

Belongs to the TRAFAC class translation factor GTPase superfamily. Classic translation factor GTPase family. EF-G/EF-2 subfamily.

Its subcellular location is the mitochondrion. It participates in protein biosynthesis; polypeptide chain elongation. Its function is as follows. Mitochondrial GTPase that catalyzes the GTP-dependent ribosomal translocation step during translation elongation. During this step, the ribosome changes from the pre-translocational (PRE) to the post-translocational (POST) state as the newly formed A-site-bound peptidyl-tRNA and P-site-bound deacylated tRNA move to the P and E sites, respectively. Catalyzes the coordinated movement of the two tRNA molecules, the mRNA and conformational changes in the ribosome. The sequence is that of Elongation factor G, mitochondrial from Coprinopsis cinerea (strain Okayama-7 / 130 / ATCC MYA-4618 / FGSC 9003) (Inky cap fungus).